Consider the following 126-residue polypeptide: Probable V-type proton ATPase subunit G (126 aa).

Positions 23 to 45 are disordered; sequence NEARKRKLQRTKQAKQEAQAEVE. The span at 26-35 shows a compositional bias: basic residues; that stretch reads RKRKLQRTKQ.

Belongs to the V-ATPase G subunit family. In terms of assembly, V-ATPase is a heteromultimeric enzyme made up of two complexes: the ATP-hydrolytic V1 complex and the proton translocation V0 complex. The V1 complex consists of three catalytic AB heterodimers that form a heterohexamer, three peripheral stalks each consisting of EG heterodimers, one central rotor including subunits D and F, and the regulatory subunits C and H. The proton translocation complex V0 consists of the proton transport subunit a, a ring of proteolipid subunits c9c'', rotary subunit d, subunits e and f, and the accessory subunits vah-19/Ac45 and vah-20/PRR.

Its function is as follows. Subunit of the V1 complex of vacuolar(H+)-ATPase (V-ATPase), a multisubunit enzyme composed of a peripheral complex (V1) that hydrolyzes ATP and a membrane integral complex (V0) that translocates protons. V-ATPase is responsible for acidifying and maintaining the pH of intracellular compartments and in some cell types, is targeted to the plasma membrane, where it is responsible for acidifying the extracellular environment. In neurons, required for necrotic cell death by promoting intracellular acidification. The sequence is that of Probable V-type proton ATPase subunit G from Caenorhabditis briggsae.